The following is a 583-amino-acid chain: Probable phosphoglucomutase, cytoplasmic 1 (583 aa).

The alpha-D-glucose 1,6-bisphosphate site is built by Arg24 and Ser123. The active-site Phosphoserine intermediate is Ser123. Mg(2+)-binding residues include Ser123, Asp299, Asp301, and Asp303. At Ser123 the chain carries Phosphoserine. Alpha-D-glucose 1,6-bisphosphate is bound by residues Asp303, Arg304, Thr367, Glu386, Ser388, and Lys399.

It belongs to the phosphohexose mutase family. In terms of assembly, monomer. It depends on Mg(2+) as a cofactor.

The protein resides in the cytoplasm. The enzyme catalyses alpha-D-glucose 1-phosphate = alpha-D-glucose 6-phosphate. It carries out the reaction O-phospho-L-seryl-[protein] + alpha-D-glucose 1-phosphate = alpha-D-glucose 1,6-bisphosphate + L-seryl-[protein]. The catalysed reaction is alpha-D-glucose 1,6-bisphosphate + L-seryl-[protein] = O-phospho-L-seryl-[protein] + alpha-D-glucose 6-phosphate. Functionally, catalyzes the reversible isomerization of alpha-D-glucose 1-phosphate to alpha-D-glucose 6-phosphate. The mechanism proceeds via the intermediate compound alpha-D-glucose 1,6-bisphosphate. This enzyme participates in both the breakdown and synthesis of glucose. This chain is Probable phosphoglucomutase, cytoplasmic 1, found in Arabidopsis thaliana (Mouse-ear cress).